The following is a 565-amino-acid chain: NAD-dependent malic enzyme (565 aa).

Y104 acts as the Proton donor in catalysis. R157 provides a ligand contact to NAD(+). The active-site Proton acceptor is the K175. A divalent metal cation-binding residues include E246, D247, and D270. Residues D270 and N418 each coordinate NAD(+).

It belongs to the malic enzymes family. As to quaternary structure, homotetramer. Mg(2+) serves as cofactor. Requires Mn(2+) as cofactor.

It carries out the reaction (S)-malate + NAD(+) = pyruvate + CO2 + NADH. The enzyme catalyses oxaloacetate + H(+) = pyruvate + CO2. This chain is NAD-dependent malic enzyme, found in Klebsiella pneumoniae (strain 342).